Here is a 328-residue protein sequence, read N- to C-terminus: Phosphatidate cytidylyltransferase (328 aa).

Residues S15–G29 show a composition bias toward polar residues. A disordered region spans residues S15–S50. The next 7 helical transmembrane spans lie at A58 to P78, A103 to T123, W124 to I144, A173 to Y193, F202 to F222, G239 to V259, and P263 to V283.

This sequence belongs to the CDS family.

The protein resides in the cell membrane. It carries out the reaction a 1,2-diacyl-sn-glycero-3-phosphate + CTP + H(+) = a CDP-1,2-diacyl-sn-glycerol + diphosphate. The protein operates within phospholipid metabolism; CDP-diacylglycerol biosynthesis; CDP-diacylglycerol from sn-glycerol 3-phosphate: step 3/3. In Mycobacterium tuberculosis (strain CDC 1551 / Oshkosh), this protein is Phosphatidate cytidylyltransferase (cdsA).